We begin with the raw amino-acid sequence, 278 residues long: Coiled-coil domain-containing protein 121 (278 aa).

Coiled-coil stretches lie at residues 1–30 (MTDLNKHIKQAQTQRKQLLEESRELHREKL) and 105–243 (QAMR…LIQA). A disordered region spans residues 253–278 (QCLNRQDVPKTTPSLPQGTKSRINPK).

This chain is Coiled-coil domain-containing protein 121 (CCDC121), found in Homo sapiens (Human).